The following is a 481-amino-acid chain: Glutamyl-tRNA(Gln) amidotransferase subunit A (481 aa).

Active-site charge relay system residues include Lys77 and Ser151. Ser175 acts as the Acyl-ester intermediate in catalysis.

The protein belongs to the amidase family. GatA subfamily. In terms of assembly, heterotrimer of A, B and C subunits.

It catalyses the reaction L-glutamyl-tRNA(Gln) + L-glutamine + ATP + H2O = L-glutaminyl-tRNA(Gln) + L-glutamate + ADP + phosphate + H(+). Allows the formation of correctly charged Gln-tRNA(Gln) through the transamidation of misacylated Glu-tRNA(Gln) in organisms which lack glutaminyl-tRNA synthetase. The reaction takes place in the presence of glutamine and ATP through an activated gamma-phospho-Glu-tRNA(Gln). In Rubrobacter xylanophilus (strain DSM 9941 / JCM 11954 / NBRC 16129 / PRD-1), this protein is Glutamyl-tRNA(Gln) amidotransferase subunit A.